The following is a 159-amino-acid chain: Early E3 18.5 kDa glycoprotein (159 aa).

Residues 1–17 (MRYMILGLLALAAVCSA) form the signal peptide. Topologically, residues 18–123 (AKKVEFKEPA…PPQKCLENTG (106 aa)) are lumenal. Intrachain disulfides connect C28-C45 and C39-C100. N-linked (GlcNAc...) asparagine; by host glycosylation is found at N29 and N78. A helical transmembrane segment spans residues 124 to 144 (TFCSTALLITALALVCTLLYL). Topologically, residues 145 to 159 (KYKSRRSFIDEKKMP) are cytoplasmic. Positions 156–159 (KKMP) match the Di-lysine motif motif.

The protein belongs to the adenoviridae E19 family. Both disulfide bonds are absolutely critical for the interaction with MHC antigens. In terms of processing, N-glycosylated; high-mannose.

The protein resides in the host endoplasmic reticulum membrane. Functionally, binds and retains class I heavy chains in the endoplasmic reticulum during the early period of virus infection, thereby impairing their transport to the cell surface. Also delays the expression of class I alleles that it cannot affect by direct retention. Binds transporters associated with antigen processing (TAP) and acts as a tapasin inhibitor, preventing class I/TAP association. In consequence, infected cells are masked for immune recognition by cytotoxic T-lymphocytes. The polypeptide is Early E3 18.5 kDa glycoprotein (Homo sapiens (Human)).